Reading from the N-terminus, the 260-residue chain is Phosphate import ATP-binding protein PstB 1 (260 aa).

The ABC transporter domain maps to 8 to 255; the sequence is TETKNVYDVL…PEHKRTEDYV (248 aa). ATP is bound at residue 46 to 53; sequence GPSGCGKS.

This sequence belongs to the ABC transporter superfamily. Phosphate importer (TC 3.A.1.7) family. The complex is composed of two ATP-binding proteins (PstB), two transmembrane proteins (PstC and PstA) and a solute-binding protein (PstS).

It localises to the cell membrane. It catalyses the reaction phosphate(out) + ATP + H2O = ADP + 2 phosphate(in) + H(+). Part of the ABC transporter complex PstSACB involved in phosphate import. Responsible for energy coupling to the transport system. This chain is Phosphate import ATP-binding protein PstB 1, found in Shouchella clausii (strain KSM-K16) (Alkalihalobacillus clausii).